Here is a 465-residue protein sequence, read N- to C-terminus: GTPase Der (465 aa).

EngA-type G domains are found at residues 3–167 and 179–352; these read PLVA…PEEG and IRIA…ESAN. Residues 9-16, 57-61, 119-122, 185-192, 232-236, and 297-300 contribute to the GTP site; these read GRPNVGKS, DTGGI, NKID, DTAGL, and NKWD. In terms of domain architecture, KH-like spans 353–437; it reads KTFTTSEVNK…PVSFIFREGT (85 aa).

Belongs to the TRAFAC class TrmE-Era-EngA-EngB-Septin-like GTPase superfamily. EngA (Der) GTPase family. In terms of assembly, associates with the 50S ribosomal subunit.

In terms of biological role, GTPase that plays an essential role in the late steps of ribosome biogenesis. This chain is GTPase Der, found in Stenotrophomonas maltophilia (strain K279a).